The following is a 487-amino-acid chain: Bifunctional protein HldE (487 aa).

The tract at residues 1–329 is ribokinase; it reads MLHAVETAFY…GALLTDATYE (329 aa). 204–207 contributes to the ATP binding site; that stretch reads NRGE. Asp274 is a catalytic residue. The interval 356-487 is cytidylyltransferase; the sequence is FTNGCFDLLH…GIVQRISAQK (132 aa).

It in the N-terminal section; belongs to the carbohydrate kinase PfkB family. The protein in the C-terminal section; belongs to the cytidylyltransferase family. As to quaternary structure, homodimer.

It carries out the reaction D-glycero-beta-D-manno-heptose 7-phosphate + ATP = D-glycero-beta-D-manno-heptose 1,7-bisphosphate + ADP + H(+). It catalyses the reaction D-glycero-beta-D-manno-heptose 1-phosphate + ATP + H(+) = ADP-D-glycero-beta-D-manno-heptose + diphosphate. It participates in nucleotide-sugar biosynthesis; ADP-L-glycero-beta-D-manno-heptose biosynthesis; ADP-L-glycero-beta-D-manno-heptose from D-glycero-beta-D-manno-heptose 7-phosphate: step 1/4. The protein operates within nucleotide-sugar biosynthesis; ADP-L-glycero-beta-D-manno-heptose biosynthesis; ADP-L-glycero-beta-D-manno-heptose from D-glycero-beta-D-manno-heptose 7-phosphate: step 3/4. In terms of biological role, catalyzes the phosphorylation of D-glycero-D-manno-heptose 7-phosphate at the C-1 position to selectively form D-glycero-beta-D-manno-heptose-1,7-bisphosphate. Functionally, catalyzes the ADP transfer from ATP to D-glycero-beta-D-manno-heptose 1-phosphate, yielding ADP-D-glycero-beta-D-manno-heptose. This is Bifunctional protein HldE from Magnetococcus marinus (strain ATCC BAA-1437 / JCM 17883 / MC-1).